The sequence spans 317 residues: Vacuolar arginine/histidine antiporter YPQ2 (317 aa).

Topologically, residues 1–13 (MSCSNGIWPTVSN) are vacuolar. A PQ-loop 1 domain is found at 8–71 (WPTVSNLCGS…AKLTGQLLFQ (64 aa)). A helical membrane pass occupies residues 14 to 34 (LCGSLSFFTSVISLFPQIIET). Topologically, residues 35–39 (YRDKS) are cytoplasmic. A helical transmembrane segment spans residues 40–62 (VDGLSPYFLLAWLCGDITSLIGA). The Vacuolar portion of the chain corresponds to 63–71 (KLTGQLLFQ). Residues 72–94 (ILLAIYFLLNDSFVCGQYYYYGV) form a helical membrane-spanning segment. At 95–143 (LHENKLATVGHEPKPLLPELVENGELLREEEDMIQGGSSAESPRSSRRR) the chain is on the cytoplasmic side. Ser-136 carries the phosphoserine modification. Residues 144–164 (SAITAALAIAHTISTASAYPL) form a helical membrane-spanning segment. The Vacuolar segment spans residues 165–184 (NVGSTQSQVGPPGDGKNSQL). Residues 185 to 205 (GTILSWIGASFYVGARIPQLI) form a helical membrane-spanning segment. The PQ-loop 2 domain occupies 185–247 (GTILSWIGAS…SCRFLDNQNK (63 aa)). The Cytoplasmic segment spans residues 206–215 (KNYNRKSTDG). The helical transmembrane segment at 216 to 236 (LSPFLFATTLLCNITYNLSIF) threads the bilayer. The Vacuolar segment spans residues 237–249 (TSCRFLDNQNKRE). A helical transmembrane segment spans residues 250–270 (FIVNELPFIFGSAGTIAFDLI). Residues 271-317 (YFYQYYILYATDMQLRELERELYSPEEDSAAQLVTERTSLLSGETQT) lie on the Cytoplasmic side of the membrane.

Belongs to the laat-1 family.

Its subcellular location is the vacuole membrane. The enzyme catalyses L-histidine(out) + L-arginine(in) = L-histidine(in) + L-arginine(out). Amino acid transporter that moves arginine across the vacuolar membrane. Active during nitrogen starvation when it exports stored vacuolar arginine to the cytosol, for use as a nitrogen source. Has been shown to function as an arginine/histidine antiporter when substrate is present on both sides of the membrane, but may also function as a uniporter. The polypeptide is Vacuolar arginine/histidine antiporter YPQ2 (YPQ2) (Saccharomyces cerevisiae (strain ATCC 204508 / S288c) (Baker's yeast)).